The primary structure comprises 119 residues: MPRVKRGVTARARHKKVLALSKGFRGRRGNVFRIAKQAVMKAGQYAYRDRRAKKRVFRRLWIARINAAARELGLTYSQFANGLKKAAIEIDRKMLADIAVHDKAAFSSIVDQVKAKLAA.

The protein belongs to the bacterial ribosomal protein bL20 family.

Binds directly to 23S ribosomal RNA and is necessary for the in vitro assembly process of the 50S ribosomal subunit. It is not involved in the protein synthesizing functions of that subunit. This Delftia acidovorans (strain DSM 14801 / SPH-1) protein is Large ribosomal subunit protein bL20.